The sequence spans 115 residues: Large ribosomal subunit protein bL19 (115 aa).

Belongs to the bacterial ribosomal protein bL19 family.

This protein is located at the 30S-50S ribosomal subunit interface and may play a role in the structure and function of the aminoacyl-tRNA binding site. This chain is Large ribosomal subunit protein bL19, found in Latilactobacillus sakei subsp. sakei (strain 23K) (Lactobacillus sakei subsp. sakei).